A 275-amino-acid chain; its full sequence is Large ribosomal subunit protein uL2cz (275 aa).

Disordered stretches follow at residues 1–20 (MAIH…AVDS) and 225–275 (NPVD…RRSK).

It belongs to the universal ribosomal protein uL2 family. As to quaternary structure, part of the 50S ribosomal subunit.

The protein localises to the plastid. It localises to the chloroplast. This is Large ribosomal subunit protein uL2cz (rpl2-A) from Populus alba (White poplar).